The primary structure comprises 2303 residues: Genome polyprotein (2303 aa).

The segment at 3 to 14 (CKHGYPDVCPIC) is a zinc-finger region. The segment at 30–46 (DGEWFPTDLLCVDLDDD) is acidic. The interval 60–73 (MEWTDVPLVCDTVM) is theilo. Positions 73 to 93 (MEPQGNASSSDKSNSQSSGNE) are disordered. A lipid anchor (N-myristoyl glycine; by host) is attached at Gly77. Residues 80 to 90 (SSSDKSNSQSS) are compositionally biased toward low complexity. Cys501 and Cys503 form a disulfide bridge. The interval 1041–1047 (YYKQRLI) is host EIF4E binding. In terms of domain architecture, SF3 helicase spans 1283–1448 (IPLASLCEKF…CKTPAGMLDI (166 aa)). ATP is bound at residue 1312–1319 (GAAGQGKS). Tyr1608 bears the O-(5'-phospho-RNA)-tyrosine mark. The Peptidase C3 domain occupies 1636–1829 (NPVMDFELFC…AATIITRELI (194 aa)). Catalysis depends on for protease 3C activity residues His1680, Asp1714, and Cys1793. The RdRp catalytic domain occupies 2071-2189 (NYVYDVDYSN…GTNYQIDFNL (119 aa)). Active-site for RdRp activity residues include Asp2077 and Asp2175.

The protein belongs to the picornaviruses polyprotein family. Interacts with host EIF4E. Interacts with the leader protein. As to quaternary structure, interacts with host RAN; the complex L-RAN recruits cellular kinases responsible for the L-induced nucleocytoplasmic trafficking inhibition. The complex L-RAN can further bind to the host exportins XPO1/CRM1 and CSE1L/CAS. Interacts with the protein 2A. Interacts with host RNASEL; this interaction prevents RNASEL activation by its substrate 2'-5' oligoadenylates. Phosphorylated. In terms of processing, specific enzymatic cleavages by the viral protease in vivo yield a variety of precursors and mature proteins. The polyprotein seems to be cotranslationally cleaved at the 2A/2B junction by a ribosomal skip from one codon to the next without formation of a peptide bond. This process would release the P1-2A peptide from the translational complex. Post-translationally, during virion maturation, immature virions are rendered infectious following cleavage of VP0 into VP4 and VP2. This maturation seems to be an autocatalytic event triggered by the presence of RNA in the capsid and is followed by a conformational change of the particle. Uridylylated by the polymerase and is covalently linked to the 5'-end of genomic RNA. This uridylylated form acts as a nucleotide-peptide primer for the polymerase. In terms of processing, myristoylation is required during RNA encapsidation and formation of the mature virus particle.

Its subcellular location is the virion. It localises to the host cytoplasm. It is found in the host nucleus. The protein localises to the host nucleolus. The protein resides in the host cytoplasmic vesicle membrane. The enzyme catalyses RNA(n) + a ribonucleoside 5'-triphosphate = RNA(n+1) + diphosphate. It carries out the reaction ATP + H2O = ADP + phosphate + H(+). It catalyses the reaction Selective cleavage of Gln-|-Gly bond in the poliovirus polyprotein. In other picornavirus reactions Glu may be substituted for Gln, and Ser or Thr for Gly.. Its function is as follows. Forms a complex with host RAN and probably binds to exportins carrying activated MAPK in order to mediate the hyperphosphorylation of host Phe/Gly containing nuclear pore proteins (Nups) resulting in cessation of active nucleocytoplasmic transport. Proteins with NLS signals fail to import, cellular mRNAs fail to export, and some proteins small enough for diffusion are not retained anymore (efflux). The resulting inhibition of cellular protein synthesis serves to ensure maximal viral gene expression and to evade host immune response. The leader protein also inhibits host interferon regulatory factor 3 (IRF3) dimerization, thereby blocking the transcriptional activation of IFN genes. Binds to host RNase L thereby preventing its activation by 2'-5' oligoadenylates in order to counteract the antiviral interferon-inducible OAS/RNase L pathway. Inhibits the integrated stress response (ISR) in the infected cell. Inhibits the host EIF2AK2/PKR by rendering this kinase unable to detect double-stranded RNA. Also impairs host stress granule formation probably by acting on a step downstream of EIF2AK2/PKR activation. Forms an icosahedral capsid of pseudo T=3 symmetry with capsid proteins VP2 and VP3. Together they form an icosahedral capsid composed of 60 copies of each VP1, VP2, and VP3, with a diameter of approximately 300 Angstroms. VP4 lies on the inner surface of the protein shell formed by VP1, VP2 and VP3. All the three latter proteins contain a beta-sheet structure called beta-barrel jelly roll. VP1 is situated at the 12 fivefold axes, whereas VP2 and VP3 are located at the quasi-sixfold axes. Functionally, lies on the inner surface of the capsid shell. After binding to the host receptor, the capsid undergoes conformational changes. Capsid protein VP4 is released, capsid protein VP1 N-terminus is externalized, and together, they shape a pore in the host membrane through which the viral genome is translocated into the host cell cytoplasm. After genome has been released, the channel shrinks. In terms of biological role, VP0 precursor is a component of immature procapsids. Its function is as follows. Involved in host translation shutoff by inhibiting cap-dependent mRNA translation. Nuclear localization is required for this function. The resulting inhibition of cellular protein synthesis serves to ensure maximal viral gene expression and to evade host immune response. Inhibits the phosphorylation of the leader protein. Binds to the RNA stem-loop essential for the ribosomal frameshift event and trans-activates the production of protein 2B*. Affects membrane integrity and causes an increase in membrane permeability. Functionally, associates with and induces structural rearrangements of intracellular membranes. It displays RNA-binding, nucleotide binding and NTPase activities. In terms of biological role, serves as membrane anchor via its hydrophobic domain. Its function is as follows. Forms a primer, VPg-pU, which is utilized by the polymerase for the initiation of RNA chains. Cysteine protease that generates mature viral proteins from the precursor polyprotein. In addition to its proteolytic activity, it binds to viral RNA, and thus influences viral genome replication. RNA and substrate cooperatively bind to the protease. Cleaves host PABP1, this cleavage is important for viral replication. Functionally, replicates the genomic and antigenomic RNAs by recognizing replications specific signals. Performs VPg uridylylation. This chain is Genome polyprotein, found in Mus musculus (Mouse).